Reading from the N-terminus, the 210-residue chain is DNA dC-&gt;dU-editing enzyme APOBEC-3H (210 aa).

A CMP/dCMP-type deaminase domain is found at 4–126 (LTAKTFSLQF…PNYQEGLLLL (123 aa)). Position 54 (His54) interacts with Zn(2+). The active-site Proton donor is the Glu56. Zn(2+) contacts are provided by Cys85 and Cys88. The interval 182 to 210 (SRSVDVLENGLRSLQLGPVTPSSSIRNSR) is necessary and sufficient for localization to the cytoplasm.

Belongs to the cytidine and deoxycytidylate deaminase family. As to quaternary structure, homodimer. Zn(2+) is required as a cofactor.

The protein resides in the cytoplasm. The enzyme catalyses a 2'-deoxycytidine in single-stranded DNA + H2O + H(+) = a 2'-deoxyuridine in single-stranded DNA + NH4(+). Antiviral activity is neutralized by the simian immunodeficiency virus rhesus (SIV-mac) virion infectivity factor (VIF). Its function is as follows. DNA deaminase (cytidine deaminase) which acts as an inhibitor of retrovirus replication and retrotransposon mobility via deaminase-dependent and -independent mechanisms. Exhibits antiviral activity against vif-deficient HIV-1. After the penetration of retroviral nucleocapsids into target cells of infection and the initiation of reverse transcription, it can induce the conversion of cytosine to uracil in the minus-sense single-strand viral DNA, leading to G-to-A hypermutations in the subsequent plus-strand viral DNA. The resultant detrimental levels of mutations in the proviral genome, along with a deamination-independent mechanism that works prior to the proviral integration, together exert efficient antiretroviral effects in infected target cells. Selectively targets single-stranded DNA and does not deaminate double-stranded DNA or single- or double-stranded RNA. In Macaca mulatta (Rhesus macaque), this protein is DNA dC-&gt;dU-editing enzyme APOBEC-3H.